Reading from the N-terminus, the 466-residue chain is Soluble pyridine nucleotide transhydrogenase (466 aa).

36–45 serves as a coordination point for FAD; it reads EKESSVGGGC.

It belongs to the class-I pyridine nucleotide-disulfide oxidoreductase family. FAD serves as cofactor.

The protein localises to the cytoplasm. The catalysed reaction is NAD(+) + NADPH = NADH + NADP(+). In terms of biological role, conversion of NADPH, generated by peripheral catabolic pathways, to NADH, which can enter the respiratory chain for energy generation. This is Soluble pyridine nucleotide transhydrogenase from Vibrio atlanticus (strain LGP32) (Vibrio splendidus (strain Mel32)).